A 327-amino-acid chain; its full sequence is Putative cyclin-dependent kinase F-2 (327 aa).

The Protein kinase domain occupies 4-295; that stretch reads YECLGKIGEG…AADALRCAWF (292 aa). ATP is bound by residues 10–18 and Lys-33; that span reads IGEGAAGVV. Asp-134 (proton acceptor) is an active-site residue. At Thr-167 the chain carries Phosphothreonine.

It belongs to the protein kinase superfamily. CMGC Ser/Thr protein kinase family. CDC2/CDKX subfamily.

It carries out the reaction L-seryl-[protein] + ATP = O-phospho-L-seryl-[protein] + ADP + H(+). It catalyses the reaction L-threonyl-[protein] + ATP = O-phospho-L-threonyl-[protein] + ADP + H(+). The catalysed reaction is [DNA-directed RNA polymerase] + ATP = phospho-[DNA-directed RNA polymerase] + ADP + H(+). The chain is Putative cyclin-dependent kinase F-2 (CDKF-2) from Oryza sativa subsp. japonica (Rice).